A 908-amino-acid chain; its full sequence is Protein translocase subunit SecA (908 aa).

Residues glutamine 87, 105 to 109, and aspartate 513 each bind ATP; that span reads GEGKT. Residues 852 to 863 show a composition bias toward low complexity; it reads ARRAQAQHATAE. The segment at 852-908 is disordered; that stretch reads ARRAQAQHATAENQLADDEAEAASPQTVVRDERKVGRNEPCPCGSGKKYKQCHGKID. Zn(2+) contacts are provided by cysteine 892, cysteine 894, cysteine 903, and histidine 904. Basic residues predominate over residues 898-908; sequence KKYKQCHGKID.

This sequence belongs to the SecA family. As to quaternary structure, monomer and homodimer. Part of the essential Sec protein translocation apparatus which comprises SecA, SecYEG and auxiliary proteins SecDF-YajC and YidC. It depends on Zn(2+) as a cofactor.

It localises to the cell inner membrane. Its subcellular location is the cytoplasm. It catalyses the reaction ATP + H2O + cellular proteinSide 1 = ADP + phosphate + cellular proteinSide 2.. In terms of biological role, part of the Sec protein translocase complex. Interacts with the SecYEG preprotein conducting channel. Has a central role in coupling the hydrolysis of ATP to the transfer of proteins into and across the cell membrane, serving both as a receptor for the preprotein-SecB complex and as an ATP-driven molecular motor driving the stepwise translocation of polypeptide chains across the membrane. This is Protein translocase subunit SecA from Vibrio atlanticus (strain LGP32) (Vibrio splendidus (strain Mel32)).